A 551-amino-acid chain; its full sequence is Arginine--tRNA ligase (551 aa).

The short motif at 125-135 (ANPTGPLHIGH) is the 'HIGH' region element.

Belongs to the class-I aminoacyl-tRNA synthetase family. In terms of assembly, monomer.

It localises to the cytoplasm. The catalysed reaction is tRNA(Arg) + L-arginine + ATP = L-arginyl-tRNA(Arg) + AMP + diphosphate. The sequence is that of Arginine--tRNA ligase from Nitratidesulfovibrio vulgaris (strain ATCC 29579 / DSM 644 / CCUG 34227 / NCIMB 8303 / VKM B-1760 / Hildenborough) (Desulfovibrio vulgaris).